The following is a 111-amino-acid chain: uncharacterized protein (111 aa).

The chain crosses the membrane as a helical span at residues 81-101 (YFFLLFYVSFPHIFLGLFFFI).

It is found in the membrane. This is an uncharacterized protein from Schizosaccharomyces pombe (strain 972 / ATCC 24843) (Fission yeast).